A 225-amino-acid chain; its full sequence is 7-cyano-7-deazaguanine synthase (225 aa).

Val-8 to Leu-18 serves as a coordination point for ATP. Cys-188, Cys-198, Cys-201, and Cys-204 together coordinate Zn(2+).

This sequence belongs to the QueC family. The cofactor is Zn(2+).

The catalysed reaction is 7-carboxy-7-deazaguanine + NH4(+) + ATP = 7-cyano-7-deazaguanine + ADP + phosphate + H2O + H(+). The protein operates within purine metabolism; 7-cyano-7-deazaguanine biosynthesis. Its function is as follows. Catalyzes the ATP-dependent conversion of 7-carboxy-7-deazaguanine (CDG) to 7-cyano-7-deazaguanine (preQ(0)). The protein is 7-cyano-7-deazaguanine synthase of Rickettsia bellii (strain OSU 85-389).